A 558-amino-acid chain; its full sequence is UvrABC system protein C (558 aa).

The 81-residue stretch at 12 to 92 folds into the GIY-YIG domain; it reads LLPGVYIFYG…IFNHKPKYNV (81 aa). Positions 200–235 constitute a UVR domain; that stretch reads SETLDLIEEKMKKHAKMMDFENAAKYRDLLVKFENV.

This sequence belongs to the UvrC family. As to quaternary structure, interacts with UvrB in an incision complex.

The protein resides in the cytoplasm. The UvrABC repair system catalyzes the recognition and processing of DNA lesions. UvrC both incises the 5' and 3' sides of the lesion. The N-terminal half is responsible for the 3' incision and the C-terminal half is responsible for the 5' incision. This Pseudothermotoga lettingae (strain ATCC BAA-301 / DSM 14385 / NBRC 107922 / TMO) (Thermotoga lettingae) protein is UvrABC system protein C.